A 238-amino-acid polypeptide reads, in one-letter code: Dolichyldiphosphatase 1 (238 aa).

The next 4 membrane-spanning stretches (helical) occupy residues 33–53 (LAYL…LIIF), 100–120 (PSSH…FLYL), 130–150 (FLDL…AFLV), and 162–182 (WSQV…WFIF).

This sequence belongs to the dolichyldiphosphatase family.

It localises to the endoplasmic reticulum membrane. The enzyme catalyses a di-trans,poly-cis-dolichyl diphosphate + H2O = a di-trans,poly-cis-dolichyl phosphate + phosphate + H(+). It functions in the pathway protein modification; protein glycosylation. Required for efficient N-glycosylation. Necessary for maintaining optimal levels of dolichol-linked oligosaccharides. Hydrolyzes dolichyl pyrophosphate at a very high rate and dolichyl monophosphate at a much lower rate. Does not act on phosphatidate. The sequence is that of Dolichyldiphosphatase 1 (DOLPP1) from Homo sapiens (Human).